The following is a 181-amino-acid chain: Inner membrane-spanning protein YciB (181 aa).

Transmembrane regions (helical) follow at residues phenylalanine 8–alanine 28, isoleucine 53–phenylalanine 73, tryptophan 76–glycine 96, leucine 121–phenylalanine 141, and phenylalanine 149–isoleucine 169.

This sequence belongs to the YciB family.

The protein localises to the cell inner membrane. Its function is as follows. Plays a role in cell envelope biogenesis, maintenance of cell envelope integrity and membrane homeostasis. This is Inner membrane-spanning protein YciB from Coxiella burnetii (strain CbuK_Q154) (Coxiella burnetii (strain Q154)).